The primary structure comprises 281 residues: Tryptophan 2,3-dioxygenase (281 aa).

Substrate contacts are provided by residues 50 to 54 (FIIQH), tyrosine 112, and arginine 116. Histidine 239 provides a ligand contact to heme. Position 253 (threonine 253) interacts with substrate.

The protein belongs to the tryptophan 2,3-dioxygenase family. As to quaternary structure, homotetramer. It depends on heme as a cofactor.

It carries out the reaction L-tryptophan + O2 = N-formyl-L-kynurenine. The protein operates within amino-acid degradation; L-tryptophan degradation via kynurenine pathway; L-kynurenine from L-tryptophan: step 1/2. Heme-dependent dioxygenase that catalyzes the oxidative cleavage of the L-tryptophan (L-Trp) pyrrole ring and converts L-tryptophan to N-formyl-L-kynurenine. Catalyzes the oxidative cleavage of the indole moiety. This chain is Tryptophan 2,3-dioxygenase, found in Saccharopolyspora erythraea (strain ATCC 11635 / DSM 40517 / JCM 4748 / NBRC 13426 / NCIMB 8594 / NRRL 2338).